A 234-amino-acid chain; its full sequence is Glucosamine-6-phosphate deaminase (234 aa).

Aspartate 62 acts as the Proton acceptor; for enolization step in catalysis. The For ring-opening step role is filled by asparagine 128. Histidine 130 functions as the Proton acceptor; for ring-opening step in the catalytic mechanism. Glutamate 135 serves as the catalytic For ring-opening step.

The protein belongs to the glucosamine/galactosamine-6-phosphate isomerase family. NagB subfamily.

The catalysed reaction is alpha-D-glucosamine 6-phosphate + H2O = beta-D-fructose 6-phosphate + NH4(+). Its pathway is amino-sugar metabolism; N-acetylneuraminate degradation; D-fructose 6-phosphate from N-acetylneuraminate: step 5/5. Its function is as follows. Catalyzes the reversible isomerization-deamination of glucosamine 6-phosphate (GlcN6P) to form fructose 6-phosphate (Fru6P) and ammonium ion. In Ligilactobacillus salivarius (strain UCC118) (Lactobacillus salivarius), this protein is Glucosamine-6-phosphate deaminase.